A 554-amino-acid polypeptide reads, in one-letter code: MNTNSRRITHGFTRSPNRAMLCAMGYDGADFAKPIIGVGSGYSTITPCNAGIQRVVDAAKAMLARHGAMTQVFGIPTISDGISMGTPGMRYSLVSREVIADCIEACACGQSMDGLLVVGGCDKNLPGGMIGLLRANIPGIYLYGGTILPGYWGARELTVVSSFEAVGAMGRQGMSIDAMREVERHACPTTGSCGGMYTANTMSASFEALGMSLLYSSTAPSPGIEGELSISTSARSLINAVRRGIRPRDVVTHRSIRNAMAVVMAVGGSTNAVLHYLAIAAAARSALSLHDVELIRRRVPVICNMKPSGLHSTADLHSAGGVPRVMHELALAGLIDESCLTITGRTIGAELLAAHRKRHGSTVVLPTNMALYRTGRLVVLSGNMSRNGAVAKTSGLSILLHSGTARVFRSEEACVQAILNGCVRIGDVVVLIYLGPKGGPGMPEMLSPTAALVGMGLGQSACLITDGRFSGGTWGLVVGHVSPEAAVGGSIALVRNGDFITVDLRNNSLHLHIDAWSLAARRAAWRLPCTLCVEGLLRKYHDGVGQSHNGAIAA.

Cys48 contributes to the [2Fe-2S] cluster binding site. Asp80 serves as a coordination point for Mg(2+). Cys121 serves as a coordination point for [2Fe-2S] cluster. Mg(2+) contacts are provided by Asp122 and Lys123. Lys123 carries the N6-carboxylysine modification. Cys193 serves as a coordination point for [2Fe-2S] cluster. A Mg(2+)-binding site is contributed by Glu444. Ser470 functions as the Proton acceptor in the catalytic mechanism.

Belongs to the IlvD/Edd family. Homodimer. [2Fe-2S] cluster serves as cofactor. It depends on Mg(2+) as a cofactor.

The enzyme catalyses (2R)-2,3-dihydroxy-3-methylbutanoate = 3-methyl-2-oxobutanoate + H2O. It carries out the reaction (2R,3R)-2,3-dihydroxy-3-methylpentanoate = (S)-3-methyl-2-oxopentanoate + H2O. It participates in amino-acid biosynthesis; L-isoleucine biosynthesis; L-isoleucine from 2-oxobutanoate: step 3/4. Its pathway is amino-acid biosynthesis; L-valine biosynthesis; L-valine from pyruvate: step 3/4. Its function is as follows. Functions in the biosynthesis of branched-chain amino acids. Catalyzes the dehydration of (2R,3R)-2,3-dihydroxy-3-methylpentanoate (2,3-dihydroxy-3-methylvalerate) into 2-oxo-3-methylpentanoate (2-oxo-3-methylvalerate) and of (2R)-2,3-dihydroxy-3-methylbutanoate (2,3-dihydroxyisovalerate) into 2-oxo-3-methylbutanoate (2-oxoisovalerate), the penultimate precursor to L-isoleucine and L-valine, respectively. The polypeptide is Dihydroxy-acid dehydratase (Tremblaya princeps).